The following is a 511-amino-acid chain: Alpha-amylase 1 (511 aa).

Positions 1 to 15 (MKFFLLLSLIGFCWA) are cleaved as a signal peptide. Gln16 is subject to Pyrrolidone carboxylic acid. 3 disulfide bridges follow: Cys43/Cys101, Cys85/Cys130, and Cys156/Cys175. Ca(2+) is bound by residues Asn115, Arg173, and Asp182. Arg210 contributes to the chloride binding site. Asp212 functions as the Nucleophile in the catalytic mechanism. Position 216 (His216) interacts with Ca(2+). Glu248 serves as the catalytic Proton donor. Residues Asn313 and Arg352 each contribute to the chloride site. Cystine bridges form between Cys393-Cys399 and Cys465-Cys477.

Belongs to the glycosyl hydrolase 13 family. As to quaternary structure, monomer. Ca(2+) is required as a cofactor. The cofactor is chloride. Expressed in liver and saliva.

The protein localises to the secreted. It carries out the reaction Endohydrolysis of (1-&gt;4)-alpha-D-glucosidic linkages in polysaccharides containing three or more (1-&gt;4)-alpha-linked D-glucose units.. This Mus musculus (Mouse) protein is Alpha-amylase 1 (Amy1).